The following is a 79-amino-acid chain: UPF0181 protein PC1_1931 (79 aa).

Residues Phe54 to Gln79 form a disordered region.

Belongs to the UPF0181 family.

This chain is UPF0181 protein PC1_1931, found in Pectobacterium carotovorum subsp. carotovorum (strain PC1).